The sequence spans 9518 residues: Nonribosomal peptide synthetase ungA' (9518 aa).

Positions Glu-214 to Arg-611 are adenylation 1. A Carrier 1 domain is found at Ala-738 to Gln-814. Ser-775 carries the O-(pantetheine 4'-phosphoryl)serine modification. Residues Asp-853–Glu-1250 form a condensation 1 region. The interval Gln-1292–Arg-1695 is adenylation 2. One can recognise a Carrier 2 domain in the interval Leu-1822–Gln-1898. The residue at position 1859 (Ser-1859) is an O-(pantetheine 4'-phosphoryl)serine. Positions Thr-1911 to Glu-2336 are epimerization 1. The segment at Glu-2376 to Asp-2803 is condensation 2. An adenylation 3 region spans residues Arg-2829–Arg-3224. One can recognise a Carrier 3 domain in the interval Ala-3352–Ser-3428. Ser-3389 is subject to O-(pantetheine 4'-phosphoryl)serine. The tract at residues Glu-3465–Leu-3869 is condensation 3. Residues Gln-3906–Arg-4307 form an adenylation 4 region. Positions Thr-4436–Asp-4512 constitute a Carrier 4 domain. Ser-4473 carries the O-(pantetheine 4'-phosphoryl)serine modification. An epimerization 2 region spans residues Ala-4527 to Leu-4954. The condensation 4 stretch occupies residues Val-4990–Arg-5411. The adenylation 5 stretch occupies residues Ser-5433–Arg-5829. The region spanning Val-5957–Ala-6033 is the Carrier 5 domain. Ser-5994 bears the O-(pantetheine 4'-phosphoryl)serine mark. The interval Glu-6050–His-6470 is epimerization 3. The interval Val-6512–Ser-6856 is condensation 5. An adenylation 6 region spans residues Leu-6947–Arg-7338. The 77-residue stretch at Leu-7464–Ala-7540 folds into the Carrier 6 domain. Ser-7501 is subject to O-(pantetheine 4'-phosphoryl)serine. Residues Glu-7555–His-7978 form an epimerization 4 region. The condensation 6 stretch occupies residues Val-8016–Gln-8444. An adenylation 7 region spans residues Met-8468–Arg-8867. Residues Pro-8995–Gln-9071 enclose the Carrier 7 domain. Position 9032 is an O-(pantetheine 4'-phosphoryl)serine (Ser-9032). Positions Asp-9111–Ser-9454 are condensation 7.

This sequence belongs to the NRP synthetase family.

The protein operates within secondary metabolite biosynthesis. Its function is as follows. Nonribosomal peptide synthetase; part of the gene cluster that mediates the biosynthesis of the unguisins, gamma-aminobutyric acid (GABA)-containing fungal cyclic heptapeptides with the amino acid sequence cyclo-(D-Ala1-D-Val2-L-Leu3-beta-MePhe4-D-Ala5-D-Trp6-GABA7) for unguisin H and cyclo-(D-Ala1-D-Ala2-L-Leu3-beta-MePhe4-D-Ala5-D-Trp6-GABA7) for unguisin I. UngA' is the main enzyme within the cluster which condenses the 7 residues using its respective 7 modules. The terminal condensation domain (Ct) is involved in cyclization with D-alanine and thereby releasing of unguisins H and I. The alanine racemase ungC' provides D-alanine, which is then accepted by the first adenylation domain of ungA', whereas the methyltransferase ungE' provides the (2R,3R)-beta-methylphenylalanine residue incorporated by the module 4. Finally, the hydrolase ungD' catalyzes the hydrolysis between the D-tryptophan and GABA residues of unguisins H and I to produce the corresponding linear peptides. This Aspergillus campestris (strain IBT 28561) protein is Nonribosomal peptide synthetase ungA'.